The sequence spans 102 residues: Small ribosomal subunit protein uS10 (102 aa).

This sequence belongs to the universal ribosomal protein uS10 family. In terms of assembly, part of the 30S ribosomal subunit.

Functionally, involved in the binding of tRNA to the ribosomes. The sequence is that of Small ribosomal subunit protein uS10 from Pyrococcus abyssi (strain GE5 / Orsay).